The sequence spans 288 residues: Tryptophan 2,3-dioxygenase (288 aa).

Substrate is bound by residues 57–61 (FIIQH), Tyr119, and Arg123. His246 contributes to the heme binding site. Substrate is bound at residue Thr260.

It belongs to the tryptophan 2,3-dioxygenase family. In terms of assembly, homotetramer. Heme serves as cofactor.

It catalyses the reaction L-tryptophan + O2 = N-formyl-L-kynurenine. The protein operates within amino-acid degradation; L-tryptophan degradation via kynurenine pathway; L-kynurenine from L-tryptophan: step 1/2. Functionally, heme-dependent dioxygenase that catalyzes the oxidative cleavage of the L-tryptophan (L-Trp) pyrrole ring and converts L-tryptophan to N-formyl-L-kynurenine. Catalyzes the oxidative cleavage of the indole moiety. The protein is Tryptophan 2,3-dioxygenase of Pseudomonas aeruginosa (strain UCBPP-PA14).